The chain runs to 1433 residues: MDSDLMDFFDFSKQFKRGTALKGCITGDPNALTTESRDSKPIKREKIGTDYVNEIVEKEKQLMNKLVDGQSVAKRNRTLDELDSDDEEENMQEQPSVRSDEAYYEKYRFDLNRNKNLPIYAQREQIMKAIRENPVVILKGETGCGKTTQVPQYILDEACKRREFCNIVVTQPRRIAAISIANRVCQERQWQPGTVCSYQVGLHRQSNVEDTRLLYCTTGVLLNNLIRLKTLTHYTHIVLDEVHERDQDMDFLLIVVRRLLALNSRHVKVILMSATIDTREFSKYFATSSAFPPVVTASHGRKYPLVKYYRDQLKNIHWKDEPQERAPGIGPEGYADAIKILLVIDNMERKAVGQSLQSYEEAKRTGSVLIFLPGINEIDTMADHITSVMEENPTMIITIVRCHSLMSPDSQEEVFQPPLPGHRKIILTTNIAESSITVPDVSYVIDFCLTKVLHTDTATNYSCLRLEWASKVNCRQRAGRVGRLRSGRVYRMVSKAFYLEEMKEFGIPEMLRSPLQNSVLKAKELEMGRPSEILALAMSPPNLSDIQNTVLLLKEVGALYTTVDGVYEELDGDLTYWGTIMSRFPLDVRLSRLIILGYVFNCLEEVIVIAAGMTVRSLYLTGKRRQVNDAFWMHYIFADGSGSDMVAIWRVYRIYLNMCQDRMLKESAEQWARRFNVNLRSLKEMHLMVQELRQRCASVNLQPLPYGTCQMWDDREKSIILKVIIAGAFYPNYFMRSNKSNADYDRSLFQSICGNDPCRTVFFTHYEPRYMGELYTRRIKELFLEVKIPPENMDVTFLHGSEKVFVTFKSDDEDMDTAKVVQVPGRVMTEVYKAVRMRLENQNRPLRVMDQNSALRYVQDRKIGVVTEGTWFPPSNQWNVELLTLPSVFAKNITGLVTYIVSCGKFYFQPRALAESIASMSEIFNGPQQLSCHVRNASAVTKGLQLLAKRGHLFQRAVVLRIETQTNGHPRFRVRFIDYGDMAVLPMDQLRLMPHELKRDFDQLPPRMFECRLALVQPSMVTSSYNRWPKAANDMLISVAQCGRLELEVYSLVNNVAAVLIHMRDGVLNDRLVERQLARRADEDYMSRKDHDLRIRKQEAKRNISVAEQERINEEYLRFAQLPKDMDLEPPPLDKCNLSIRLRGPFSPLESSMNSMLRIGMYKSVTIDKDSVNAVLLDTDPQDRHDQMVVAASVTETDNTERLTARGTTLMPNIHGFGALMAMLFCPTMQIKCNKDRTKYVCLLAGLGFDPETLEPYFAEHDMVINLDVTILRDDIRIINQMRYNIDSMFYNFDANEMPSVGTEDRVVIFNQLRSLLTRLLGKDRSFIERHVSNSEYLWEDMSDLEPPSEPYGKRAIFPMHSSYDLENDNLSNLLELQANCKQLYDWRNFEGNLQTQVCRLCNESLESVAELRLHLLTQLHRDREKQVGYKQQ.

Positions 76-98 are disordered; sequence NRTLDELDSDDEEENMQEQPSVR. Residues 81–91 show a composition bias toward acidic residues; the sequence is ELDSDDEEENM. Residues 127–294 enclose the Helicase ATP-binding domain; that stretch reads MKAIRENPVV…FATSSAFPPV (168 aa). 140-147 lines the ATP pocket; sequence GETGCGKT. A DEAH box motif is present at residues 240 to 243; it reads DEVH. Residues 354 to 526 enclose the Helicase C-terminal domain; that stretch reads QSLQSYEEAK…NSVLKAKELE (173 aa). A Tudor domain is found at 937 to 1000; that stretch reads ASAVTKGLQL…RLMPHELKRD (64 aa).

The protein belongs to the DEAD box helicase family. DEAH subfamily.

The protein resides in the cytoplasm. The enzyme catalyses ATP + H2O = ADP + phosphate + H(+). In terms of biological role, probable ATP-binding RNA helicase which plays a central role during spermatogenesis and oogenesis by repressing transposable elements and preventing their mobilization, which is essential for the germline integrity. Acts via the piRNA metabolic process, which mediates the repression of transposable elements during meiosis by forming complexes composed of piRNAs and Piwi and govern the methylation and subsequent repression of transposons. Involved in the repression of LTR retrotransposon copia. Also involved in telomere regulation by repressing specialized telomeric retroelements HeT-A, TAHRE, and TART; Drosophila telomeres being maintained by transposition of specialized telomeric retroelements. Involved in telomeric trans-silencing, a repression mechanism by which a transposon or a transgene inserted in subtelomeric heterochromatin has the capacity to repress in trans in the female germline, a homologous transposon, or transgene located in euchromatin. Involved in the repression of testis-expressed Stellate genes by the homologous Su(Ste) repeats. Required for anteroposterior and dorsoventral axis formation during oogenesis. This chain is Probable ATP-dependent RNA helicase spindle-E (spn-E), found in Drosophila virilis (Fruit fly).